A 361-amino-acid chain; its full sequence is G-protein coupled receptor 52 (361 aa).

Residues 1–44 lie on the Extracellular side of the membrane; that stretch reads MNESRWTEWRILNMSSSIVNVSEHHSCPLGFGHYSVEDVCIFET. 3 N-linked (GlcNAc...) asparagine glycosylation sites follow: asparagine 2, asparagine 13, and asparagine 20. A helical transmembrane segment spans residues 45-65; sequence VVIVLLTFLIISGNLTVIFVF. The Cytoplasmic segment spans residues 66–81; sequence HCAPLLHHYTTSYFIQ. A helical membrane pass occupies residues 82–102; it reads TMAYADLLVGVTCLVPTLSLL. The Extracellular portion of the chain corresponds to 103 to 115; it reads HYSTGVHESLTCQ. Residues cysteine 114 and cysteine 193 are joined by a disulfide bond. A helical transmembrane segment spans residues 116–136; sequence VFGYIISVLKSVSMACLACIS. Residues 137–159 are Cytoplasmic-facing; it reads VDRYLAITKPLSYNQLVTPCRLR. Residues 160 to 180 form a helical membrane-spanning segment; the sequence is ICIIMIWIYSCLIFLPSFFGW. Topologically, residues 181–205 are extracellular; it reads GKPGYHGDIFEWCATSWLTSAYFTC. A helical transmembrane segment spans residues 206–226; that stretch reads FIVCLLYAPAALVVCFTYFHI. At 227–265 the chain is on the cytoplasmic side; the sequence is FKICRQHTKEINDRRARFPSHEVEASREAGHSPDRRYAM. The helical transmembrane segment at 266 to 286 threads the bilayer; sequence VLFRITSVFYMLWLPYIIYFL. Topologically, residues 287–296 are extracellular; it reads LESSRVLDNP. A helical membrane pass occupies residues 297–317; the sequence is TLSFLTTWLAISNSFCNCVIY. Residues 318-361 are Cytoplasmic-facing; that stretch reads SLSNSVFRLGLRRLSETMCTSCVCAKDQEAQDPKPRRRANSCSI.

The protein belongs to the G-protein coupled receptor 1 family. Expressed in brain, especially in striatum. Expressed in the striatum, nucleus accumbens, and lateral globus pallidus.

It localises to the cell membrane. In terms of biological role, G- protein coupled receptor activated by antipsychotics reserpine leading to an increase in intracellular cAMP and its internalization. May play a role in locomotor activity through modulation of dopamine, NMDA and ADORA2A-induced locomotor activity. These behavioral changes are accompanied by modulation of the dopamine receptor signaling pathway in striatum. Modulates HTT level via cAMP-dependent but PKA independent mechanisms throught activation of RAB39B that translocates HTT to the endoplasmic reticulum, thus avoiding proteasome degradation. This is G-protein coupled receptor 52 from Mus musculus (Mouse).